The following is a 114-amino-acid chain: T cell receptor beta variable 5-1 (114 aa).

The first 21 residues, 1–21 (MGSRLLCWVLLCLLGAGPVKA), serve as a signal peptide directing secretion. Residues 22-114 (GVTQTPRYLI…SALYLCASSL (93 aa)) form the Ig-like domain. Cys-42 and Cys-110 are disulfide-bonded. N-linked (GlcNAc...) asparagine glycosylation is present at Asn-96.

In terms of assembly, alpha-beta TR is a heterodimer composed of an alpha and beta chain; disulfide-linked. The alpha-beta TR is associated with the transmembrane signaling CD3 coreceptor proteins to form the TR-CD3 (TcR or TCR). The assembly of alpha-beta TR heterodimers with CD3 occurs in the endoplasmic reticulum where a single alpha-beta TR heterodimer associates with one CD3D-CD3E heterodimer, one CD3G-CD3E heterodimer and one CD247 homodimer forming a stable octameric structure. CD3D-CD3E and CD3G-CD3E heterodimers preferentially associate with TR alpha and TR beta chains, respectively. The association of the CD247 homodimer is the last step of TcR assembly in the endoplasmic reticulum and is required for transport to the cell surface.

Its subcellular location is the cell membrane. In terms of biological role, v region of the variable domain of T cell receptor (TR) beta chain that participates in the antigen recognition. Alpha-beta T cell receptors are antigen specific receptors which are essential to the immune response and are present on the cell surface of T lymphocytes. Recognize peptide-major histocompatibility (MH) (pMH) complexes that are displayed by antigen presenting cells (APC), a prerequisite for efficient T cell adaptive immunity against pathogens. Binding of alpha-beta TR to pMH complex initiates TR-CD3 clustering on the cell surface and intracellular activation of LCK that phosphorylates the ITAM motifs of CD3G, CD3D, CD3E and CD247 enabling the recruitment of ZAP70. In turn ZAP70 phosphorylates LAT, which recruits numerous signaling molecules to form the LAT signalosome. The LAT signalosome propagates signal branching to three major signaling pathways, the calcium, the mitogen-activated protein kinase (MAPK) kinase and the nuclear factor NF-kappa-B (NF-kB) pathways, leading to the mobilization of transcription factors that are critical for gene expression and essential for T cell growth and differentiation. The T cell repertoire is generated in the thymus, by V-(D)-J rearrangement. This repertoire is then shaped by intrathymic selection events to generate a peripheral T cell pool of self-MH restricted, non-autoaggressive T cells. Post-thymic interaction of alpha-beta TR with the pMH complexes shapes TR structural and functional avidity. This Homo sapiens (Human) protein is T cell receptor beta variable 5-1.